The chain runs to 158 residues: 6,7-dimethyl-8-ribityllumazine synthase (158 aa).

5-amino-6-(D-ribitylamino)uracil contacts are provided by residues F22, A57–E59, and A81–I83. G86–T87 is a binding site for (2S)-2-hydroxy-3-oxobutyl phosphate. H89 functions as the Proton donor in the catalytic mechanism. Residue F114 coordinates 5-amino-6-(D-ribitylamino)uracil. R128 lines the (2S)-2-hydroxy-3-oxobutyl phosphate pocket.

It belongs to the DMRL synthase family. Forms an icosahedral capsid composed of 60 subunits, arranged as a dodecamer of pentamers.

The catalysed reaction is (2S)-2-hydroxy-3-oxobutyl phosphate + 5-amino-6-(D-ribitylamino)uracil = 6,7-dimethyl-8-(1-D-ribityl)lumazine + phosphate + 2 H2O + H(+). It functions in the pathway cofactor biosynthesis; riboflavin biosynthesis; riboflavin from 2-hydroxy-3-oxobutyl phosphate and 5-amino-6-(D-ribitylamino)uracil: step 1/2. Catalyzes the formation of 6,7-dimethyl-8-ribityllumazine by condensation of 5-amino-6-(D-ribitylamino)uracil with 3,4-dihydroxy-2-butanone 4-phosphate. This is the penultimate step in the biosynthesis of riboflavin. The sequence is that of 6,7-dimethyl-8-ribityllumazine synthase from Shewanella loihica (strain ATCC BAA-1088 / PV-4).